A 955-amino-acid chain; its full sequence is Glycine dehydrogenase (decarboxylating) (955 aa).

K702 carries the post-translational modification N6-(pyridoxal phosphate)lysine.

This sequence belongs to the GcvP family. In terms of assembly, the glycine cleavage system is composed of four proteins: P, T, L and H. Pyridoxal 5'-phosphate serves as cofactor.

The catalysed reaction is N(6)-[(R)-lipoyl]-L-lysyl-[glycine-cleavage complex H protein] + glycine + H(+) = N(6)-[(R)-S(8)-aminomethyldihydrolipoyl]-L-lysyl-[glycine-cleavage complex H protein] + CO2. Its function is as follows. The glycine cleavage system catalyzes the degradation of glycine. The P protein binds the alpha-amino group of glycine through its pyridoxal phosphate cofactor; CO(2) is released and the remaining methylamine moiety is then transferred to the lipoamide cofactor of the H protein. The polypeptide is Glycine dehydrogenase (decarboxylating) (Stenotrophomonas maltophilia (strain R551-3)).